A 271-amino-acid polypeptide reads, in one-letter code: Dihydropteroate synthase type-2 (271 aa).

Residues 1–259 (MNKSLIIFGI…EPRPLRDGLA (259 aa)) form the Pterin-binding domain. Asn12 provides a ligand contact to 4-aminobenzoate. Diphosphate contacts are provided by Asn12, Phe18, Ser51, and Ser52. Asn12 serves as a coordination point for Mg(2+). 7,8-dihydropteroate-binding residues include Ser52, Asp85, Asn104, Asp174, Phe179, Lys213, and Ser214. Positions 85, 104, and 174 each coordinate (7,8-dihydropterin-6-yl)methyl diphosphate. The 6-hydroxymethyl-7,8-dihydropterin site is built by Asn104 and Asp174. Residue Lys213 participates in (7,8-dihydropterin-6-yl)methyl diphosphate binding. A 6-hydroxymethyl-7,8-dihydropterin-binding site is contributed by Lys213. Arg247 lines the 4-aminobenzoate pocket. 2 residues coordinate diphosphate: Arg247 and His249. Residue 247–249 (RTH) coordinates (7,8-dihydropterin-6-yl)methyl diphosphate.

It belongs to the DHPS family. Homodimer. Mg(2+) is required as a cofactor.

It carries out the reaction (7,8-dihydropterin-6-yl)methyl diphosphate + 4-aminobenzoate = 7,8-dihydropteroate + diphosphate. It functions in the pathway cofactor biosynthesis; tetrahydrofolate biosynthesis; 7,8-dihydrofolate from 2-amino-4-hydroxy-6-hydroxymethyl-7,8-dihydropteridine diphosphate and 4-aminobenzoate: step 1/2. In terms of biological role, catalyzes the condensation of para-aminobenzoate (pABA) with 6-hydroxymethyl-7,8-dihydropterin diphosphate (DHPt-PP) to form 7,8-dihydropteroate (H2Pte), the immediate precursor of folate derivatives. Confers resistance to sulfonamide antibiotics, including sulfamethoxazole (SMX), sulfadiazine and sulfisoxazole. The type II enzyme is stable whereas type I DHPS loses its activity rapidly. The chain is Dihydropteroate synthase type-2 from Escherichia coli.